Here is a 159-residue protein sequence, read N- to C-terminus: Putative 2'-deoxynucleoside 5'-phosphate N-hydrolase 1 (159 aa).

Residues 25–31 (FLSGSIR), Tyr-40, His-58, Glu-104, and 126–128 (SAM) each bind substrate.

It belongs to the 2'-deoxynucleoside 5'-phosphate N-hydrolase 1 family. In terms of assembly, monomer and homodimer.

The catalysed reaction is a pyrimidine 2'-deoxyribonucleoside 5'-phosphate + H2O = a pyrimidine nucleobase + 2-deoxy-D-ribose 5-phosphate. The enzyme catalyses a purine 2'-deoxyribonucleoside 5'-phosphate + H2O = a purine nucleobase + 2-deoxy-D-ribose 5-phosphate. Its function is as follows. Catalyzes the cleavage of the N-glycosidic bond of deoxyribonucleoside 5'-monophosphates to yield deoxyribose 5-phosphate and a purine or pyrimidine base. In Methanosarcina barkeri (strain Fusaro / DSM 804), this protein is Putative 2'-deoxynucleoside 5'-phosphate N-hydrolase 1.